The following is a 534-amino-acid chain: Probable inorganic phosphate transporter 1-8 (534 aa).

Over 1 to 21 (MPIKVLSSLDVARTQWYHFKA) the chain is Cytoplasmic. Residues 22–42 (IIVAGMGLFTDAYDLFCIAPV) traverse the membrane as a helical segment. Over 43–61 (MKMISHVYYNGDSINTAVL) the chain is Extracellular. The helical transmembrane segment at 62 to 82 (STSYAIALLGTATGQLVFGYL) threads the bilayer. Topologically, residues 83 to 90 (GDRVGRRR) are cytoplasmic. The helical transmembrane segment at 91–111 (VYGLCLIIMILSSFGCGFSVC) threads the bilayer. Residues 112 to 123 (TTRRSCVMVSLG) lie on the Extracellular side of the membrane. Residues 124–144 (FFRFFLGLGIGGDYPLSATIM) traverse the membrane as a helical segment. The Cytoplasmic segment spans residues 145–153 (SEFANKRTR). A helical transmembrane segment spans residues 154–174 (GAFIAAVFSMQGLGILVSSAV). The Extracellular portion of the chain corresponds to 175-199 (TMAVCVAFKRSGGGLEVDAAAPTEA). The helical transmembrane segment at 200–220 (DLAWRLILMIGALPAALTFYW) threads the bilayer. At 221–281 (RMLMPETARY…KLFSRCFFRL (61 aa)) the chain is on the cytoplasmic side. Residues 282-302 (HGRDLFAASFNWFLVDIVFYT) traverse the membrane as a helical segment. At 303–333 (SNLLLSHIFSHYSKKPSTAENVYDAAFEVAE) the chain is on the extracellular side. The helical transmembrane segment at 334–354 (LGAIIAACSTIPGYWFTVYFI) threads the bilayer. Over 355–361 (DKIGRVK) the chain is Cytoplasmic. A helical membrane pass occupies residues 362 to 382 (IQIMGFFFMAVIYLVAGIPYS). At 383–396 (WYWSKHEHNNKGFM) the chain is on the extracellular side. Residues 397 to 417 (VLYGLVFFFCNFGPNTTTFII) form a helical membrane-spanning segment. Residues 418 to 431 (PAEHFPARFRSTCH) lie on the Cytoplasmic side of the membrane. The chain crosses the membrane as a helical span at residues 432–452 (GISGAAGKLGAIVGTVGFLWA). Residues 453-472 (TKKMESDDKNQIYPEVNRMR) are Extracellular-facing. A helical transmembrane segment spans residues 473–493 (IAFLILGGVCIAGILVTYFFT). The Cytoplasmic segment spans residues 494 to 534 (KETMGRSLEENEHDQDNNAESEDEPQIVDGQSSVSTLLQTR). Residues 501–534 (LEENEHDQDNNAESEDEPQIVDGQSSVSTLLQTR) are disordered. Residues 510-519 (NNAESEDEPQ) are compositionally biased toward acidic residues. Residue Ser-514 is modified to Phosphoserine. Residues 522–534 (DGQSSVSTLLQTR) show a composition bias toward polar residues.

The protein belongs to the major facilitator superfamily. Phosphate:H(+) symporter (TC 2.A.1.9) family. In terms of tissue distribution, in roots.

The protein localises to the membrane. Its function is as follows. High-affinity transporter for external inorganic phosphate. The chain is Probable inorganic phosphate transporter 1-8 (PHT1-8) from Arabidopsis thaliana (Mouse-ear cress).